The following is a 375-amino-acid chain: Alanine racemase (375 aa).

Lysine 38 (proton acceptor; specific for D-alanine) is an active-site residue. N6-(pyridoxal phosphate)lysine is present on lysine 38. Residue arginine 137 participates in substrate binding. Tyrosine 266 (proton acceptor; specific for L-alanine) is an active-site residue. Residue methionine 314 participates in substrate binding.

It belongs to the alanine racemase family. It depends on pyridoxal 5'-phosphate as a cofactor.

It catalyses the reaction L-alanine = D-alanine. The protein operates within amino-acid biosynthesis; D-alanine biosynthesis; D-alanine from L-alanine: step 1/1. Its function is as follows. Catalyzes the interconversion of L-alanine and D-alanine. May also act on other amino acids. This is Alanine racemase (alr) from Cutibacterium acnes (strain DSM 16379 / KPA171202) (Propionibacterium acnes).